Reading from the N-terminus, the 131-residue chain is Insulin-like 3 (131 aa).

Positions 1 to 26 are cleaved as a signal peptide; sequence MDPHPLTWALVLLGPALALSRAPAPA. 3 disulfides stabilise this stretch: C34-C116, C46-C129, and C115-C120. A propeptide spans 58-103 (c peptide like); the sequence is AVAGGDRELLQWLEGQHLFHGLMASGDPMLVLAPQPPPQASGHHHH.

It belongs to the insulin family. In terms of assembly, heterodimer of a B chain and an A chain linked by two disulfide bonds. Expressed exclusively in prenatal and postnatal Leydig cells.

It localises to the secreted. Seems to play a role in testicular function. May be a trophic hormone with a role in testicular descent in fetal life. Is a ligand for LGR8 receptor. The chain is Insulin-like 3 (INSL3) from Sus scrofa (Pig).